The sequence spans 366 residues: Small ribosomal subunit biogenesis GTPase RsgA (366 aa).

Residues 107–266 (RSEGQILAAN…LIDTPGLRGV (160 aa)) form the CP-type G domain. GTP-binding positions include 154-157 (TKAD) and 208-216 (GQSGAGKST). 4 residues coordinate Zn(2+): Cys289, Cys294, His296, and Cys302.

The protein belongs to the TRAFAC class YlqF/YawG GTPase family. RsgA subfamily. Monomer. Associates with 30S ribosomal subunit, binds 16S rRNA. Zn(2+) serves as cofactor.

It localises to the cytoplasm. One of several proteins that assist in the late maturation steps of the functional core of the 30S ribosomal subunit. Helps release RbfA from mature subunits. May play a role in the assembly of ribosomal proteins into the subunit. Circularly permuted GTPase that catalyzes slow GTP hydrolysis, GTPase activity is stimulated by the 30S ribosomal subunit. This Streptomyces coelicolor (strain ATCC BAA-471 / A3(2) / M145) protein is Small ribosomal subunit biogenesis GTPase RsgA.